A 1040-amino-acid polypeptide reads, in one-letter code: Multidrug resistance protein MdtB (1040 aa).

Transmembrane regions (helical) follow at residues 16–36 (FIMR…AGII), 347–367 (LMMA…NIPA), 369–389 (IIPG…MVFL), 396–416 (LTLM…IVVI), 440–460 (IGFT…PLLF), 472–492 (FAIT…TLTP), 537–557 (WLTL…WVFI), 863–883 (LGST…VLGI), 888–908 (FIHP…ALLA), 911–931 (IAGS…IGIV), 968–988 (ILMT…STGV), and 998–1018 (IGMV…TPVI).

The protein belongs to the resistance-nodulation-cell division (RND) (TC 2.A.6) family. MdtB subfamily. Part of a tripartite efflux system composed of MdtA, MdtB and MdtC. MdtB forms a heteromultimer with MdtC.

It is found in the cell inner membrane. Its function is as follows. The MdtABC tripartite complex confers resistance against novobiocin and deoxycholate. This Escherichia coli O81 (strain ED1a) protein is Multidrug resistance protein MdtB.